Consider the following 306-residue polypeptide: Pantothenate kinase (306 aa).

Residue 91 to 98 participates in ATP binding; it reads GSVAVGKS.

The protein belongs to the prokaryotic pantothenate kinase family.

It is found in the cytoplasm. It carries out the reaction (R)-pantothenate + ATP = (R)-4'-phosphopantothenate + ADP + H(+). The protein operates within cofactor biosynthesis; coenzyme A biosynthesis; CoA from (R)-pantothenate: step 1/5. The sequence is that of Pantothenate kinase from Streptococcus mutans serotype c (strain ATCC 700610 / UA159).